A 1276-amino-acid chain; its full sequence is Botulinum neurotoxin type D (1276 aa).

Zn(2+) is bound at residue His229. Glu230 is a catalytic residue. The Zn(2+) site is built by His233 and Glu269. Cys437 and Cys450 are disulfide-bonded. The translocation domain (TD) stretch occupies residues 443 to 862 (NSRDDSTCIK…LKDIINEYFN (420 aa)). The interval 458–547 (LPYVADKDSI…DYLNSYYYLE (90 aa)) is belt. The N-terminus of receptor binding domain (N-RBD), Hcn stretch occupies residues 863 to 1082 (SINDSKILSL…NIVYEGQILR (220 aa)). The tract at residues 1083–1276 (NVIKDYWGNP…FISRDPGWVE (194 aa)) is C-terminus of receptor binding domain (C-RBD), Hcc. 4 residues coordinate N-acetyl-beta-neuraminate: Thr1172, Asp1173, Lys1192, and Arg1239. Positions 1235-1245 (YKPWRFSFKNA) are ganglioside-binding loop. Positions 1252 to 1255 (TNYE) match the Host ganglioside-binding motif motif.

Belongs to the peptidase M27 family. Heterodimer; disulfide-linked heterodimer of a light chain (LC) and a heavy chain (HC). The LC has the proteolytic/pharmacological activity. The N- and C-termini of the HC mediate channel formation and eukaryotic host cell binding, respectively. Can also be purified in complex with a non-toxic component that is larger than the HC. Single chain toxin from strain D-4947 copurifies with NTHNA, and in complexes that include NTNHA, HA-70, HA-33 and HA-17. Dichain toxin from strain CB-16 phage d-16 phi copurifies with NTHNA, and in complexes that include NTNHA, HA-55, HA-33, HA-22 and HA-17. The stoichiometry of the whole complex has been modeled as one BoNT/D, one NTNHA, three HA-70, six HA-33 and three HA-17. HC interacts with eukaryotic protein synaptic vesicle glycoprotein 2B (SV2B), which may serve as its receptor. Another group does not find a convincing interaction with SV2. The cofactor is Zn(2+).

Its subcellular location is the secreted. The catalysed reaction is Limited hydrolysis of proteins of the neuroexocytosis apparatus, synaptobrevins, SNAP25 or syntaxin. No detected action on small molecule substrates.. Inhibited by dipicolinic acid, captopril, 1,10-phenanthroline and EDTA. In terms of biological role, botulinum toxin causes flaccid paralysis by inhibiting neurotransmitter (acetylcholine) release from the presynaptic membranes of nerve terminals of the eukaryotic host skeletal and autonomic nervous system, with frequent heart or respiratory failure. Precursor of botulinum neurotoxin D for which a proteinaceous coreceptor is controversial. In double SV2A/SV2B knockout mice this toxin does not degrade its synaptobrevin target; introducing SV2A, SV2B or SV2C restores target cleavage. Recognition of SV2 by this toxin does not occur via SV2 glycosylation or its large extracellular loop 4. Another group does not find a convincing interaction with SV2. Thus a protein receptor for this BoNT serotype has yet to be definitively proven. Recognizes at least 1 complex polysialylated ganglioside found on neural tissue. Electrical stimulation increases uptake of toxin in an ex vivo assay, presumably by transiently exposing a receptor usually found in eukaryotic target synaptic vesicles. Upon synaptic vesicle recycling the toxin is taken up via the endocytic pathway; when the pH of the toxin-containing endosome drops a structural rearrangement occurs so that the N-terminus of the heavy chain (HC) forms pores that allows the light chain (LC) to translocate into the cytosol. Once in the cytosol the disulfide bond linking the 2 subunits is reduced and LC cleaves its target protein on synaptic vesicles, preventing their fusion with the cytoplasmic membrane and thus neurotransmitter release. Requires complex eukaryotic host polysialogangliosides for full neurotoxicity and for binding to neurons. Has proteolytic activity. After translocation into the eukaryotic host cytosol, inhibits neurotransmitter release by acting as a zinc endopeptidase that cleaves the '61-Lys-|-Leu-62' bond of synaptobrevin-1 (VAMP1), and the equivalent 'Lys-|-Leu' sites in VAMP2 and VAMP3. Cleaves the '49-Lys-|-Ile-50' bond of A.californica synaptobrevin (AC P35589). This chain probably has to be partially unfolded to translocate into the eukaryotic host cell cytosol. Functionally, responsible for host epithelial cell transcytosis, host nerve cell targeting and translocation of light chain (LC) into eukaryotic host cell cytosol. Composed of 3 subdomains; the translocation domain (TD), and N-terminus and C-terminus of the receptor-binding domain (RBD). The RBD is responsible for the adherence of the toxin to the eukaryotic target cell surface. The N-terminus of the TD wraps an extended belt around the perimeter of the LC, protecting Zn(2+) in the active site; it may also prevent premature LC dissociation from the translocation channel and protect toxin prior to translocation. The TD inserts into synaptic vesicle membrane to allow translocation into the host cytosol. The RBD binds eukaryotic host phosphatidylethanolamine, which may serve as toxin receptor. Treatment of synaptosomes with proteinase K does not reduce HC binding, suggesting there is no protein receptor or it is protected from extracellular proteases. HC significantly decreases uptake and toxicity of whole BoNT/D. HC also interferes with uptake of tetanus toxin. Has 2 closely located carbohydrate-binding receptor sites and binds at least 1 GT1b ganglioside. Bind gangliosides in the order GD2 &gt; GT1b &gt; GD1b. Interacts with eukaryotic target protein SV2B (synaptic vesicle glycoprotein 2B). Expression of SV2A, SV2B or SV2C in mice knocked-out for the SV2 proteins restores entry of BoNT/D and cleavage of VAMP2, suggesting SV2 acts as its receptor. Unlike BoNT/A and BoNT/E, toxin uptake is not mediated by large extracellular loop 4 of SV2. Another group finds very poor interaction with SV2 proteins, suggesting the possible protein receptor may not have been identified. The polypeptide is Botulinum neurotoxin type D (botD) (Clostridium botulinum (Clostridium botulinum D bacteriophage)).